We begin with the raw amino-acid sequence, 1350 residues long: ABC transporter C family member 13 (1350 aa).

An ABC transmembrane type-1 1 domain is found at 107–390 (NKKSIFIVIL…LPEAIHNLLG (284 aa)). The next 4 membrane-spanning stretches (helical) occupy residues 111 to 131 (IFIVILCAIFSILSPLCLKYF), 143 to 163 (TFLTGLGYCVLLFVGTFSYTL), 215 to 235 (IGLFADFFWIGHLEIIIFPIQ), and 240 to 260 (LALLCWIVGWSGLVGFGVMII). Positions 462–481 (EKSEEEYETTTTTTDDNNNN) are disordered. The span at 470-481 (TTTTTTDDNNNN) shows a compositional bias: low complexity. In terms of domain architecture, ABC transporter 1 spans 473 to 693 (TTTDDNNNNN…IDFESIMKTK (221 aa)). Residue 505 to 512 (GVVGSGKT) coordinates ATP. Residues 774–1061 (KHGSSTFFFI…FVELEVKMNS (288 aa)) form the ABC transmembrane type-1 2 domain. 6 consecutive transmembrane segments (helical) span residues 776-796 (GSSTFFFIATCVVYFFSQAIF), 816-836 (DSFYIFYYIIFIGLFIVTLVI), 887-907 (IDLLLYDLFSDVLYCGSTVVF), 909-929 (ICVMIYISPLISLPFLVLIIV), 1003-1023 (IGVRLEFISALVVFLTAFFSL), and 1029-1049 (GFSVLSVTTAIGMCTYLNWAV). An ABC transporter 2 domain is found at 1103-1337 (IEFRDVEIRY…KNSKFSKLVK (235 aa)). 1137–1144 (GRTGAGKS) serves as a coordination point for ATP.

This sequence belongs to the ABC transporter superfamily. ABCC family. Conjugate transporter (TC 3.A.1.208) subfamily.

Its subcellular location is the membrane. The chain is ABC transporter C family member 13 (abcC13) from Dictyostelium discoideum (Social amoeba).